Here is a 227-residue protein sequence, read N- to C-terminus: Lipoprotein-releasing system ATP-binding protein LolD (227 aa).

In terms of domain architecture, ABC transporter spans 5-227; that stretch reads LICQNITKHY…QDGILRESNS (223 aa). ATP is bound at residue 41 to 48; the sequence is GSSGSGKS.

This sequence belongs to the ABC transporter superfamily. Lipoprotein translocase (TC 3.A.1.125) family. In terms of assembly, the complex is composed of two ATP-binding proteins (LolD) and two transmembrane proteins (LolC and LolE).

The protein resides in the cell inner membrane. Its function is as follows. Part of the ABC transporter complex LolCDE involved in the translocation of mature outer membrane-directed lipoproteins, from the inner membrane to the periplasmic chaperone, LolA. Responsible for the formation of the LolA-lipoprotein complex in an ATP-dependent manner. The chain is Lipoprotein-releasing system ATP-binding protein LolD from Histophilus somni (strain 129Pt) (Haemophilus somnus).